A 91-amino-acid chain; its full sequence is Acylphosphatase (91 aa).

Residues 6-91 (CMRCYISGRV…WEDYISFDVL (86 aa)) enclose the Acylphosphatase-like domain. Catalysis depends on residues Arg-21 and Asn-39.

Belongs to the acylphosphatase family.

It carries out the reaction an acyl phosphate + H2O = a carboxylate + phosphate + H(+). This Legionella pneumophila subsp. pneumophila (strain Philadelphia 1 / ATCC 33152 / DSM 7513) protein is Acylphosphatase (acyP).